The chain runs to 165 residues: MRIDTSALCDIYSDQVDVVEPIFSSFGGASSFYGKITTVKCFENNGLIAEVLEEEGEGRVLLIDGGGAVRRALIDAELAKLAVDNGWQGIIVYGAVRQLDVLETLDIGIHALAPIPVGAEDADIGEVDTPVNFGGVTFFPEDYVYADLTGIILSPELLDLNELAE.

Belongs to the RraA family. Homotrimer. Binds to both RNA-binding sites in the C-terminal region of Rne and to RhlB.

It localises to the cytoplasm. In terms of biological role, globally modulates RNA abundance by binding to RNase E (Rne) and regulating its endonucleolytic activity. Can modulate Rne action in a substrate-dependent manner by altering the composition of the degradosome. Modulates RNA-binding and helicase activities of the degradosome. The protein is Regulator of ribonuclease activity A of Haemophilus ducreyi (strain 35000HP / ATCC 700724).